We begin with the raw amino-acid sequence, 545 residues long: Bifunctional purine biosynthesis protein PurH (545 aa).

Residues 1-150 form the MGS-like domain; sequence MTNTNRPIRR…KNHATVAIVT (150 aa).

Belongs to the PurH family.

It carries out the reaction (6R)-10-formyltetrahydrofolate + 5-amino-1-(5-phospho-beta-D-ribosyl)imidazole-4-carboxamide = 5-formamido-1-(5-phospho-D-ribosyl)imidazole-4-carboxamide + (6S)-5,6,7,8-tetrahydrofolate. The catalysed reaction is IMP + H2O = 5-formamido-1-(5-phospho-D-ribosyl)imidazole-4-carboxamide. It participates in purine metabolism; IMP biosynthesis via de novo pathway; 5-formamido-1-(5-phospho-D-ribosyl)imidazole-4-carboxamide from 5-amino-1-(5-phospho-D-ribosyl)imidazole-4-carboxamide (10-formyl THF route): step 1/1. The protein operates within purine metabolism; IMP biosynthesis via de novo pathway; IMP from 5-formamido-1-(5-phospho-D-ribosyl)imidazole-4-carboxamide: step 1/1. In Bifidobacterium longum (strain NCC 2705), this protein is Bifunctional purine biosynthesis protein PurH.